A 278-amino-acid chain; its full sequence is Putative cysteine-rich repeat secretory protein 17 (278 aa).

Positions Met1–Ser32 are cleaved as a signal peptide. Gnk2-homologous domains are found at residues Tyr39 to Asn142 and Tyr148 to Phe265.

It belongs to the cysteine-rich repeat secretory protein family.

The protein localises to the secreted. The protein is Putative cysteine-rich repeat secretory protein 17 (CRRSP17) of Arabidopsis thaliana (Mouse-ear cress).